The primary structure comprises 574 residues: Membrane protein insertase YidC (574 aa).

6 helical membrane passes run valine 6–glutamate 26, valine 350–leucine 370, phenylalanine 376–tyrosine 396, glycine 447–valine 467, phenylalanine 491–proline 511, and proline 525–valine 545.

The protein belongs to the OXA1/ALB3/YidC family. Type 1 subfamily. Interacts with the Sec translocase complex via SecD. Specifically interacts with transmembrane segments of nascent integral membrane proteins during membrane integration.

The protein localises to the cell inner membrane. In terms of biological role, required for the insertion and/or proper folding and/or complex formation of integral membrane proteins into the membrane. Involved in integration of membrane proteins that insert both dependently and independently of the Sec translocase complex, as well as at least some lipoproteins. Aids folding of multispanning membrane proteins. The protein is Membrane protein insertase YidC of Xanthomonas oryzae pv. oryzae (strain KACC10331 / KXO85).